A 339-amino-acid polypeptide reads, in one-letter code: MAELEFTDEKFTKVDPELKEILKKHPAGTENITNIWQMRAMDEECRKQLAETILPLPDDVSVTDILIPTRDGTEIDGRVFTPVSVPADYRSLMVFYHSSGWCMRGVRDDDSLFKILTPKFGCVCVSVDYRLAPESKFPVAHNDAIDSFKWVASNIEKLGANPKRGFFLGGASAGGNFVSVLSHIARDEKIKPELTGLWHMVPTLIHPADLDEETMAQFRSYKETIHAPVITPKIMDIFFENYQPTPKSPLVNPLYYPTGHKDLPPSFFQCCGWDPLRDEGIAYEKALKAAGNETRLIVYEGVPHCFWVYYPMLSLRKKYFEDAIDGFTWLLSHVKKEDD.

The protein belongs to the AB hydrolase superfamily.

This is AB hydrolase superfamily protein B1A11.02 from Schizosaccharomyces pombe (strain 972 / ATCC 24843) (Fission yeast).